The chain runs to 362 residues: MKILVTGGAGFIGSAVVRHIINNTQDSVINVDKLTYAGNLESLTEIENNERYKFEHADICDSVAIANIFAHHQPDAIMHLAAESHVDRSITGPADFIETNIVGTYILLEEARKYWLALSEDRKGAFRFHHISTDEVYGDLPHPDEVSSDTILPLFTEQTSYSPSSPYSASKASSDHLVRAWRRTYGLPTIVTNCSNNYGPYHFPEKLIPLIILNAIAGKLLPVYGNGEQIRDWLYVEDHARALYEVVTKGVPGETYNIGGHNERKNIDVVKTICRILDELIADKPDGIENFEQLIRYVSDRPGHDLRYAIDASKIKQDLGWVPQETFETGITKTIHWYLNNKEWWQRVMDGSYAGERLGLVE.

Residues 11 to 12, 32 to 35, 58 to 59, 80 to 84, and Thr99 contribute to the NAD(+) site; these read FI, DKLT, DI, and LAAES. Ser84 is a substrate binding site. A substrate-binding site is contributed by Thr133. The Proton donor role is filled by Asp134. Residues Glu135 and Tyr167 each act as proton acceptor in the active site. 167–171 is an NAD(+) binding site; it reads YSASK. A substrate-binding site is contributed by Asn196. An NAD(+)-binding site is contributed by Asn197. Residues 206–207, 222–224, Arg231, Asn266, and 300–304 each bind substrate; these read KL, PVY, and DRPGH.

This sequence belongs to the NAD(P)-dependent epimerase/dehydratase family. dTDP-glucose dehydratase subfamily. It depends on NAD(+) as a cofactor.

It catalyses the reaction dTDP-alpha-D-glucose = dTDP-4-dehydro-6-deoxy-alpha-D-glucose + H2O. The protein operates within bacterial outer membrane biogenesis; LPS O-antigen biosynthesis. Functionally, catalyzes the dehydration of dTDP-D-glucose to form dTDP-4-dehydro-6-deoxy-D-glucose via a three-step process involving oxidation, dehydration and reduction. This reaction is a step in the biosynthesis of D-fucofuranose, a component of E.coli O52 O antigen. This chain is dTDP-glucose 4,6-dehydratase (rmlB), found in Escherichia coli.